The primary structure comprises 487 residues: Glutamyl-tRNA(Gln) amidotransferase subunit A (487 aa).

Active-site charge relay system residues include Lys80 and Ser155. Ser179 functions as the Acyl-ester intermediate in the catalytic mechanism.

The protein belongs to the amidase family. GatA subfamily. As to quaternary structure, heterotrimer of A, B and C subunits.

The catalysed reaction is L-glutamyl-tRNA(Gln) + L-glutamine + ATP + H2O = L-glutaminyl-tRNA(Gln) + L-glutamate + ADP + phosphate + H(+). In terms of biological role, allows the formation of correctly charged Gln-tRNA(Gln) through the transamidation of misacylated Glu-tRNA(Gln) in organisms which lack glutaminyl-tRNA synthetase. The reaction takes place in the presence of glutamine and ATP through an activated gamma-phospho-Glu-tRNA(Gln). The chain is Glutamyl-tRNA(Gln) amidotransferase subunit A from Leptospira interrogans serogroup Icterohaemorrhagiae serovar Lai (strain 56601).